An 88-amino-acid polypeptide reads, in one-letter code: Putative regulatory protein AM1_5498 (88 aa).

Belongs to the RemA family.

The sequence is that of Putative regulatory protein AM1_5498 from Acaryochloris marina (strain MBIC 11017).